Reading from the N-terminus, the 676-residue chain is DNA-directed RNA polymerase subunit beta' (676 aa).

4 residues coordinate Zn(2+): Cys69, Cys71, Cys87, and Cys90. The Mg(2+) site is built by Asp489, Asp491, and Asp493.

It belongs to the RNA polymerase beta' chain family. RpoC1 subfamily. As to quaternary structure, in plastids the minimal PEP RNA polymerase catalytic core is composed of four subunits: alpha, beta, beta', and beta''. When a (nuclear-encoded) sigma factor is associated with the core the holoenzyme is formed, which can initiate transcription. The cofactor is Mg(2+). Zn(2+) is required as a cofactor.

The protein resides in the plastid. It is found in the chloroplast. It carries out the reaction RNA(n) + a ribonucleoside 5'-triphosphate = RNA(n+1) + diphosphate. Its function is as follows. DNA-dependent RNA polymerase catalyzes the transcription of DNA into RNA using the four ribonucleoside triphosphates as substrates. The sequence is that of DNA-directed RNA polymerase subunit beta' from Lolium perenne (Perennial ryegrass).